A 250-amino-acid chain; its full sequence is MRVDVLTIFPEMFTGFLNTSIIKRAREQGRLEVNLVNIRAYARNKHRNVDDYPFGGGPGMVMQAEPLFLAVEDLLPGGEAARPPVILMSPQGEAFNQGMAEELAREEHLILICGHYEGVDERVRLALVTREISIGDYVLTGGELPAMVIIDAVTRLLPGVLGAPEGAREDSFAMGLLEYPQYTRPRSFRGLEVPEVLLSGNHEQIRRWRRQQALERTWRRRPDLLARVNLSPEDRRFLEEISRREGERTP.

Residues glycine 114 and 134–139 contribute to the S-adenosyl-L-methionine site; that span reads IGDYVL.

The protein belongs to the RNA methyltransferase TrmD family. Homodimer.

The protein localises to the cytoplasm. It carries out the reaction guanosine(37) in tRNA + S-adenosyl-L-methionine = N(1)-methylguanosine(37) in tRNA + S-adenosyl-L-homocysteine + H(+). In terms of biological role, specifically methylates guanosine-37 in various tRNAs. This chain is tRNA (guanine-N(1)-)-methyltransferase, found in Moorella thermoacetica (strain ATCC 39073 / JCM 9320).